A 393-amino-acid polypeptide reads, in one-letter code: Lipid-A-disaccharide synthase (393 aa).

This sequence belongs to the LpxB family.

It catalyses the reaction a lipid X + a UDP-2-N,3-O-bis[(3R)-3-hydroxyacyl]-alpha-D-glucosamine = a lipid A disaccharide + UDP + H(+). The protein operates within bacterial outer membrane biogenesis; LPS lipid A biosynthesis. Condensation of UDP-2,3-diacylglucosamine and 2,3-diacylglucosamine-1-phosphate to form lipid A disaccharide, a precursor of lipid A, a phosphorylated glycolipid that anchors the lipopolysaccharide to the outer membrane of the cell. This Actinobacillus pleuropneumoniae serotype 3 (strain JL03) protein is Lipid-A-disaccharide synthase.